A 192-amino-acid polypeptide reads, in one-letter code: 3-hydroxyanthranilate 3,4-dioxygenase 1 (192 aa).

R50 is an O2 binding site. Residues H54, E60, and H102 each contribute to the Fe cation site. Position 60 (E60) interacts with substrate. Substrate is bound by residues R106 and E116. A divalent metal cation contacts are provided by C131, C134, C168, and C171.

Belongs to the 3-HAO family. Fe(2+) is required as a cofactor.

The protein localises to the cytoplasm. The catalysed reaction is 3-hydroxyanthranilate + O2 = (2Z,4Z)-2-amino-3-carboxymuconate 6-semialdehyde. It functions in the pathway cofactor biosynthesis; NAD(+) biosynthesis; quinolinate from L-kynurenine: step 3/3. Catalyzes the oxidative ring opening of 3-hydroxyanthranilate to 2-amino-3-carboxymuconate semialdehyde, which spontaneously cyclizes to quinolinate. This chain is 3-hydroxyanthranilate 3,4-dioxygenase 1 (bna1-1), found in Aspergillus clavatus (strain ATCC 1007 / CBS 513.65 / DSM 816 / NCTC 3887 / NRRL 1 / QM 1276 / 107).